We begin with the raw amino-acid sequence, 388 residues long: Trichodiene synthase (388 aa).

6 residues coordinate Mg(2+): D109, E173, N234, S238, E242, and D248. Positions 109–113 (DDSRE) are aspartate-rich domain.

Belongs to the trichodiene synthase family. The cofactor is Mg(2+). Mn(2+) is required as a cofactor.

The catalysed reaction is (2E,6E)-farnesyl diphosphate = trichodiene + diphosphate. It participates in sesquiterpene biosynthesis; trichothecene biosynthesis. In terms of biological role, trichodiene synthase; part of the gene cluster that mediates the production of the antimicrobial trichothecene harzianum A (HA) that plays a role in Botrytis cinerea antagonistic activity and plant defense priming. The biosynthesis of harzianum A begins with the cyclization of farnesyl diphosphate to trichodiene and is catalyzed by the trichodiene synthase TRI5. Trichodiene undergoes a series of oxygenations catalyzed by the cytochrome P450 monooxygenase TRI4. TRI4 controls the addition of 3 oxygens at C-2, C-11, and the C-12, C-13-epoxide to form the intermediate isotrichodiol. Isotrichodiol then undergoes a non-enzymatic isomerization and cyclization to form 12,13-epoxytrichothec-9-ene (EPT) which is further converted to trichodermol by the cytochrome P450 monooxygenase TRI11 via C-4 hydroxylation. The last step of HA synthesis is esterification of an octatriendioyl moiety to the C-4 oxygen of trichodermol. The octatriendioyl moiety is probably produced by the polyketide synthase TRI17 and the esterification performed by the trichothecene O-acetyltransferase TRI3. This Trichoderma arundinaceum protein is Trichodiene synthase.